The chain runs to 334 residues: MSVAERLQRAWYQGHPALCLLAPLELLYRRVVEARRRRFLEDPNTSYRAPVPVVVVGNITVGGTGKTPLILWLIEHCQRRGLRVGVVSRGYAAEPPTLPWRVRAEHPAQHCGDEPLLIVQRTGVPLMIDPDRARAVRALLQQEPLDLILSDDGLQHYRLARDLELVLIDAARGLGNGRCLPAGPLREPPERLGEVDAVLFNGAAADTVEGYAFSLQPVGLVELSTGRRWPLDHYPAGQQLHAVAGIGNPQRFFDTLETLHWRPIPHAFADHADYSPEQLKFSPELPLVMTEKDAVKCRAFAPPGWSYLQVQAVPSTAFVTWFDDQLARLLPDLS.

60–67 (TVGGTGKT) contributes to the ATP binding site.

Belongs to the LpxK family.

It carries out the reaction a lipid A disaccharide + ATP = a lipid IVA + ADP + H(+). It functions in the pathway glycolipid biosynthesis; lipid IV(A) biosynthesis; lipid IV(A) from (3R)-3-hydroxytetradecanoyl-[acyl-carrier-protein] and UDP-N-acetyl-alpha-D-glucosamine: step 6/6. Its function is as follows. Transfers the gamma-phosphate of ATP to the 4'-position of a tetraacyldisaccharide 1-phosphate intermediate (termed DS-1-P) to form tetraacyldisaccharide 1,4'-bis-phosphate (lipid IVA). The polypeptide is Tetraacyldisaccharide 4'-kinase (Stutzerimonas stutzeri (strain A1501) (Pseudomonas stutzeri)).